Reading from the N-terminus, the 340-residue chain is Protein-arginine kinase (340 aa).

The 222-residue stretch at 21-242 (VVLSSRIRLA…EQIIMQERIA (222 aa)) folds into the Phosphagen kinase C-terminal domain. ATP-binding positions include 24-28 (SSRIR), histidine 79, arginine 113, 164-168 (RASVM), and 195-200 (RGIYGE).

Belongs to the ATP:guanido phosphotransferase family.

The enzyme catalyses L-arginyl-[protein] + ATP = N(omega)-phospho-L-arginyl-[protein] + ADP + H(+). Its function is as follows. Catalyzes the specific phosphorylation of arginine residues in proteins. The protein is Protein-arginine kinase of Listeria monocytogenes serotype 4a (strain HCC23).